A 58-amino-acid chain; its full sequence is Small ribosomal subunit protein eS31 (58 aa).

Zn(2+) contacts are provided by Cys29, Cys32, Cys48, and Cys51. The C4-type zinc finger occupies 29–51 (CPRCGSFMAHHLKPVPRWHCGKC).

This sequence belongs to the eukaryotic ribosomal protein eS31 family. In terms of assembly, part of the 30S ribosomal subunit. Zn(2+) serves as cofactor.

This chain is Small ribosomal subunit protein eS31, found in Ignicoccus hospitalis (strain KIN4/I / DSM 18386 / JCM 14125).